A 349-amino-acid polypeptide reads, in one-letter code: Early nodulin-like protein 2 (349 aa).

A signal peptide spans 1 to 28 (MTFLKMKSLSFFFTILLSLSTLFTISNA). Residues 29 to 130 (RKFNVGGSGA…GQKLNVVVIS (102 aa)) form the Phytocyanin domain. An intrachain disulfide couples Cys84 to Cys118. The interval 136–330 (TAQSPHAAAP…GQKKSSANGM (195 aa)) is disordered. Low complexity-rich tracts occupy residues 145–201 (PGSS…SPPG) and 224–234 (TSPVSPSSAPM). Residues 249 to 260 (IPPSSAPMTSPP) are compositionally biased toward polar residues. A compositionally biased stretch (low complexity) spans 263–312 (MAPKSSSPVSNSPTVSPSLAPGGSTSSSPSDSPSGSAMGPSGDGPSAAGD). A lipid anchor (GPI-anchor amidated serine) is attached at Ser325. Positions 326 to 349 (SANGMTVMSITTVLSLVLTIFLSA) are cleaved as a propeptide — removed in mature form.

This sequence belongs to the early nodulin-like (ENODL) family. As to expression, mostly expressed in leaves and roots, and, to a lower extent, in seedlings, stems and flowers, but barely in seeds.

The protein localises to the cell membrane. In terms of biological role, may act as a carbohydrate transporter. The polypeptide is Early nodulin-like protein 2 (Arabidopsis thaliana (Mouse-ear cress)).